We begin with the raw amino-acid sequence, 552 residues long: Ribulokinase (552 aa).

It belongs to the ribulokinase family.

The catalysed reaction is D-ribulose + ATP = D-ribulose 5-phosphate + ADP + H(+). It carries out the reaction L-ribulose + ATP = L-ribulose 5-phosphate + ADP + H(+). It functions in the pathway carbohydrate degradation; L-arabinose degradation via L-ribulose; D-xylulose 5-phosphate from L-arabinose (bacterial route): step 2/3. This chain is Ribulokinase, found in Bacillus licheniformis (strain ATCC 14580 / DSM 13 / JCM 2505 / CCUG 7422 / NBRC 12200 / NCIMB 9375 / NCTC 10341 / NRRL NRS-1264 / Gibson 46).